We begin with the raw amino-acid sequence, 194 residues long: Adenylate kinase isoenzyme 1 (194 aa).

Residue Met1 is modified to N-acetylmethionine. 18-23 provides a ligand contact to ATP; sequence GSGKGT. A Phosphoserine modification is found at Ser38. An NMP region spans residues 38–67; that stretch reads STGDLLRAEVSSGSARGKMLSEIMEKGQLV. AMP is bound by residues Thr39, Arg44, 65-67, 94-97, and Gln101; these read QLV and GYPR. Residues 131 to 141 form an LID region; that stretch reads KRGETSGRVDD. Position 132 (Arg132) interacts with ATP. Residues Arg138 and Arg149 each contribute to the AMP site. Gly177 is an ATP binding site.

It belongs to the adenylate kinase family. AK1 subfamily. In terms of assembly, monomer. Mg(2+) is required as a cofactor.

The protein resides in the cytoplasm. It carries out the reaction a ribonucleoside 5'-phosphate + ATP = a ribonucleoside 5'-diphosphate + ADP. The catalysed reaction is AMP + ATP = 2 ADP. It catalyses the reaction dAMP + ATP = dADP + ADP. The enzyme catalyses dATP + AMP = dADP + ADP. It carries out the reaction dAMP + dATP = 2 dADP. The catalysed reaction is a 2'-deoxyribonucleoside 5'-diphosphate + ATP = a 2'-deoxyribonucleoside 5'-triphosphate + ADP. It catalyses the reaction a ribonucleoside 5'-diphosphate + ATP = a ribonucleoside 5'-triphosphate + ADP. The enzyme catalyses CDP + GTP = CTP + GDP. It carries out the reaction GDP + ATP = GTP + ADP. The catalysed reaction is UDP + ATP = UTP + ADP. It catalyses the reaction GTP + UDP = UTP + GDP. The enzyme catalyses dTDP + GTP = dTTP + GDP. It carries out the reaction dCDP + GTP = dCTP + GDP. The catalysed reaction is dGDP + ATP = dGTP + ADP. It catalyses the reaction dADP + GTP = dATP + GDP. The enzyme catalyses thiamine diphosphate + ADP = thiamine triphosphate + AMP. Functionally, catalyzes the reversible transfer of the terminal phosphate group between ATP and AMP. Also displays broad nucleoside diphosphate kinase activity. Plays an important role in cellular energy homeostasis and in adenine nucleotide metabolism. Also catalyzes at a very low rate the synthesis of thiamine triphosphate (ThTP) from thiamine diphosphate (ThDP) and ADP. The sequence is that of Adenylate kinase isoenzyme 1 from Sus scrofa (Pig).